The primary structure comprises 342 residues: 3-isopropylmalate dehydrogenase (342 aa).

Arginine 92, arginine 102, arginine 126, and aspartate 216 together coordinate substrate. Aspartate 216, aspartate 240, and aspartate 244 together coordinate Mg(2+). 276–288 (GSAPDIAGKGIAD) serves as a coordination point for NAD(+).

The protein belongs to the isocitrate and isopropylmalate dehydrogenases family. LeuB type 2 subfamily. In terms of assembly, homodimer. Mg(2+) serves as cofactor. Mn(2+) is required as a cofactor.

Its subcellular location is the cytoplasm. The catalysed reaction is (2R,3S)-3-isopropylmalate + NAD(+) = 4-methyl-2-oxopentanoate + CO2 + NADH. It functions in the pathway amino-acid biosynthesis; L-leucine biosynthesis; L-leucine from 3-methyl-2-oxobutanoate: step 3/4. Functionally, catalyzes the oxidation of 3-carboxy-2-hydroxy-4-methylpentanoate (3-isopropylmalate) to 3-carboxy-4-methyl-2-oxopentanoate. The product decarboxylates to 4-methyl-2 oxopentanoate. This chain is 3-isopropylmalate dehydrogenase, found in Corynebacterium kroppenstedtii (strain DSM 44385 / JCM 11950 / CIP 105744 / CCUG 35717).